The following is a 355-amino-acid chain: Probable butyrate kinase (355 aa).

This sequence belongs to the acetokinase family.

It localises to the cytoplasm. The catalysed reaction is butanoate + ATP = butanoyl phosphate + ADP. The sequence is that of Probable butyrate kinase from Listeria welshimeri serovar 6b (strain ATCC 35897 / DSM 20650 / CCUG 15529 / CIP 8149 / NCTC 11857 / SLCC 5334 / V8).